The following is a 99-amino-acid chain: Large ribosomal subunit protein uL23 (99 aa).

It belongs to the universal ribosomal protein uL23 family. As to quaternary structure, part of the 50S ribosomal subunit. Contacts protein L29, and trigger factor when it is bound to the ribosome.

Its function is as follows. One of the early assembly proteins it binds 23S rRNA. One of the proteins that surrounds the polypeptide exit tunnel on the outside of the ribosome. Forms the main docking site for trigger factor binding to the ribosome. This is Large ribosomal subunit protein uL23 from Streptococcus suis (strain 98HAH33).